Consider the following 208-residue polypeptide: Methyl-CpG-binding domain protein 3-like 4 (208 aa).

Belongs to the MBD3L family.

This Homo sapiens (Human) protein is Methyl-CpG-binding domain protein 3-like 4 (MBD3L4).